Here is a 443-residue protein sequence, read N- to C-terminus: Phosphoglucosamine mutase (443 aa).

Ser-102 (phosphoserine intermediate) is an active-site residue. The Mg(2+) site is built by Ser-102, Asp-241, Asp-243, and Asp-245. Ser-102 carries the phosphoserine modification.

Belongs to the phosphohexose mutase family. The cofactor is Mg(2+). Activated by phosphorylation.

The enzyme catalyses alpha-D-glucosamine 1-phosphate = D-glucosamine 6-phosphate. Catalyzes the conversion of glucosamine-6-phosphate to glucosamine-1-phosphate. The protein is Phosphoglucosamine mutase of Acinetobacter baylyi (strain ATCC 33305 / BD413 / ADP1).